A 231-amino-acid polypeptide reads, in one-letter code: Large ribosomal subunit protein uL1 (231 aa).

It belongs to the universal ribosomal protein uL1 family. Part of the 50S ribosomal subunit.

Functionally, binds directly to 23S rRNA. The L1 stalk is quite mobile in the ribosome, and is involved in E site tRNA release. Protein L1 is also a translational repressor protein, it controls the translation of the L11 operon by binding to its mRNA. In Nitrosococcus oceani (strain ATCC 19707 / BCRC 17464 / JCM 30415 / NCIMB 11848 / C-107), this protein is Large ribosomal subunit protein uL1.